The sequence spans 570 residues: Ribosome-inactivating protein SNAI (570 aa).

A signal peptide spans 1-28 (MRLVAKLLYLAVLAICGLGIHGALTHPR). 3 N-linked (GlcNAc...) asparagine glycosylation sites follow: Asn-40, Asn-62, and Asn-144. Glu-199 is a catalytic residue. Asn-260 is a glycosylation site (N-linked (GlcNAc...) asparagine). 3 disulfides stabilise this stretch: Cys-284-Cys-316, Cys-332-Cys-351, and Cys-373-Cys-385. Ricin B-type lectin domains follow at residues 319–439 (VEVT…WTVG) and 441–566 (VEPL…WITT). The stretch at 329-369 (DGLCVDVRYGHYIDGNPVQLRPCGNECNQLWTFRTDGTIRW) is one 1-alpha repeat. A 1-beta repeat occupies 370–405 (LGKCLTASSSVMIYDCNTVPPEATKWVVSIDGTITN). One copy of the 1-gamma repeat lies at 408–440 (SGLVLTAPQAAEGTALSLENNIHAARQGWTVGD). The 2-alpha repeat unit spans residues 452–489 (KQMCLRENGENNFVWLEDCVLNRVQQEWALYGDGTIRV). A disulfide bond links Cys-455 and Cys-470. N-linked (GlcNAc...) asparagine glycosylation occurs at Asn-492. The 2-beta repeat unit spans residues 493 to 531 (RSLCVTSEDHEPSDLIVILKCEGSGNQRWVFNTNGTISN). Cysteines 496 and 513 form a disulfide. N-linked (GlcNAc...) asparagine glycosylation occurs at Asn-526. The stretch at 534 to 567 (AKLLMDVAQRDVSLRKIILYRPTGNPNQQWITTT) is one 2-gamma repeat.

This sequence belongs to the ribosome-inactivating protein family. Type 2 RIP subfamily. As to quaternary structure, tetramer of four pairs of disulfide bound A-B chains. The precursor is processed in two chains, A and B, that are linked by a disulfide bond. A small truncated form corresponding roughly to the second ricin B-type lectin domain of the B chain, TrSNAI, can also be produced. Post-translationally, glycosylated. N-glycans of subunit A are (Man)2-3(Xyl)(GlcNAc)2(Fuc) at Asn-40, (GlcNAc)0-2(Man)3(Xyl)(GlcNAc)2(Fuc) or (Man)1-2(GlcNAc)2 at Asn-62, (Man)3(Xyl)(GlcNAc)2(Fuc)0-1 at Asn-144 and (GlcNAc)0-1(Man)3(Xyl)(GlcNAc)2(Fuc) at Asn-260. N-glycans of subunit B are (Man)3(Xyl)(GlcNAc)2(Fuc) at Asn-492 and (Man)6-9(GlcNAc)2 at Asn-526. Expressed in bark.

The enzyme catalyses Endohydrolysis of the N-glycosidic bond at one specific adenosine on the 28S rRNA.. Functionally, neu5Ac(alpha2-6)Gal/GalNAc specific agglutinin. Behaves as a type-2 ribosome-inactivating protein. Strongly inhibits mammalian but not plant ribosomes. The A chain is responsible for inhibiting protein synthesis through the catalytic inactivation of 60S ribosomal subunits by removing adenine from position 4,324 of 28S rRNA. The B chain binds to cell receptors and probably facilitates the entry into the cell of the A chain; B chains are also responsible for cell agglutination (lectin activity). Involved in plant defense against insects. Its function is as follows. Binds Neu5Ac(alpha2-6)Gal/GalNAc but has no clear agglutination activity. This chain is Ribosome-inactivating protein SNAI, found in Sambucus nigra (European elder).